A 54-amino-acid polypeptide reads, in one-letter code: Large ribosomal subunit protein bL32c (54 aa).

This sequence belongs to the bacterial ribosomal protein bL32 family.

Its subcellular location is the plastid. It localises to the chloroplast. This Gossypium barbadense (Sea Island cotton) protein is Large ribosomal subunit protein bL32c.